A 376-amino-acid chain; its full sequence is Queuine tRNA-ribosyltransferase (376 aa).

Asp89 (proton acceptor) is an active-site residue. Substrate is bound by residues 89–93 (DSGGF), Asp143, Gln194, and Gly221. The segment at 252-258 (GVGTPSN) is RNA binding. The Nucleophile role is filled by Asp271. Residues 276-280 (ARNGR) form an RNA binding; important for wobble base 34 recognition region. Residues Cys309, Cys311, Cys314, and His340 each contribute to the Zn(2+) site.

Belongs to the queuine tRNA-ribosyltransferase family. In terms of assembly, homodimer. Within each dimer, one monomer is responsible for RNA recognition and catalysis, while the other monomer binds to the replacement base PreQ1. Zn(2+) serves as cofactor.

The enzyme catalyses 7-aminomethyl-7-carbaguanine + guanosine(34) in tRNA = 7-aminomethyl-7-carbaguanosine(34) in tRNA + guanine. The protein operates within tRNA modification; tRNA-queuosine biosynthesis. In terms of biological role, catalyzes the base-exchange of a guanine (G) residue with the queuine precursor 7-aminomethyl-7-deazaguanine (PreQ1) at position 34 (anticodon wobble position) in tRNAs with GU(N) anticodons (tRNA-Asp, -Asn, -His and -Tyr). Catalysis occurs through a double-displacement mechanism. The nucleophile active site attacks the C1' of nucleotide 34 to detach the guanine base from the RNA, forming a covalent enzyme-RNA intermediate. The proton acceptor active site deprotonates the incoming PreQ1, allowing a nucleophilic attack on the C1' of the ribose to form the product. After dissociation, two additional enzymatic reactions on the tRNA convert PreQ1 to queuine (Q), resulting in the hypermodified nucleoside queuosine (7-(((4,5-cis-dihydroxy-2-cyclopenten-1-yl)amino)methyl)-7-deazaguanosine). In Clostridium acetobutylicum (strain ATCC 824 / DSM 792 / JCM 1419 / IAM 19013 / LMG 5710 / NBRC 13948 / NRRL B-527 / VKM B-1787 / 2291 / W), this protein is Queuine tRNA-ribosyltransferase.